We begin with the raw amino-acid sequence, 274 residues long: Diaminopimelate epimerase (274 aa).

Substrate-binding residues include N11, Q44, and N64. Catalysis depends on C73, which acts as the Proton donor. Substrate contacts are provided by residues 74–75, N157, N190, and 208–209; these read GN and ER. The active-site Proton acceptor is the C217. 218–219 contacts substrate; the sequence is GS.

This sequence belongs to the diaminopimelate epimerase family. Homodimer.

The protein resides in the cytoplasm. It carries out the reaction (2S,6S)-2,6-diaminopimelate = meso-2,6-diaminopimelate. It participates in amino-acid biosynthesis; L-lysine biosynthesis via DAP pathway; DL-2,6-diaminopimelate from LL-2,6-diaminopimelate: step 1/1. Functionally, catalyzes the stereoinversion of LL-2,6-diaminopimelate (L,L-DAP) to meso-diaminopimelate (meso-DAP), a precursor of L-lysine and an essential component of the bacterial peptidoglycan. The chain is Diaminopimelate epimerase from Actinobacillus succinogenes (strain ATCC 55618 / DSM 22257 / CCUG 43843 / 130Z).